Reading from the N-terminus, the 276-residue chain is NAD(+)--dinitrogen-reductase ADP-D-ribosyltransferase (276 aa).

In terms of assembly, monomer.

It catalyses the reaction L-arginyl-[dinitrogen reductase] + NAD(+) = N(omega)-alpha-(ADP-D-ribosyl)-L-arginyl-[dinitrogen reductase] + nicotinamide + H(+). Functionally, involved in the regulation of the nitrogen fixation activity by the reversible ADP-ribosylation of the dinitrogenase reductase component of the nitrogenase enzyme complex. The ADP-ribosyltransferase (DraT) transfers the ADP-ribose group from NAD to dinitrogenase reductase. The ADP-ribose group is removed through the action of the ADP-ribosylglycohydrolase (DraG). The chain is NAD(+)--dinitrogen-reductase ADP-D-ribosyltransferase (draT) from Rhodospirillum rubrum.